A 709-amino-acid polypeptide reads, in one-letter code: Heme/hemopexin utilization protein C (709 aa).

The first 21 residues, 1-21, serve as a signal peptide directing secretion; it reads MRFSKLSLAITTTLVTANALA. Positions 36 to 147 constitute a TBDR plug domain; the sequence is DPSRFTYTPQ…LGGVVAMRTP (112 aa). Positions 158 to 709 constitute a TBDR beta-barrel domain; that stretch reads KFGVKIRQGY…NAKISAVYSF (552 aa). The short motif at 692-709 is the TonB C-terminal box element; it reads SLMEGTGRNAKISAVYSF.

Belongs to the TonB-dependent receptor family.

It is found in the cell outer membrane. Functionally, required for utilization of free heme at low concentrations. In Haemophilus influenzae (strain 86-028NP), this protein is Heme/hemopexin utilization protein C (hxuC).